The sequence spans 337 residues: Nicotinate-nucleotide--dimethylbenzimidazole phosphoribosyltransferase (337 aa).

Catalysis depends on Glu305, which acts as the Proton acceptor.

It belongs to the CobT family.

The catalysed reaction is 5,6-dimethylbenzimidazole + nicotinate beta-D-ribonucleotide = alpha-ribazole 5'-phosphate + nicotinate + H(+). The protein operates within nucleoside biosynthesis; alpha-ribazole biosynthesis; alpha-ribazole from 5,6-dimethylbenzimidazole: step 1/2. In terms of biological role, catalyzes the synthesis of alpha-ribazole-5'-phosphate from nicotinate mononucleotide (NAMN) and 5,6-dimethylbenzimidazole (DMB). This chain is Nicotinate-nucleotide--dimethylbenzimidazole phosphoribosyltransferase, found in Jannaschia sp. (strain CCS1).